The following is a 345-amino-acid chain: NADH-ubiquinone oxidoreductase chain 2 (345 aa).

10 consecutive transmembrane segments (helical) span residues 1–21 (MNPL…ILTT), 26–46 (WVSA…IISM), 60–80 (FLIQ…NAHL), 96–115 (IALT…HFWL), 122–144 (VPIL…LLIM), 148–170 (LIPT…LGGL), 201–223 (TLLN…HLTM), 242–262 (SLFL…GFIP), 274–294 (NLTP…MFYL), and 323–343 (TSTL…TPTL).

It belongs to the complex I subunit 2 family.

The protein localises to the mitochondrion inner membrane. The catalysed reaction is a ubiquinone + NADH + 5 H(+)(in) = a ubiquinol + NAD(+) + 4 H(+)(out). Its function is as follows. Core subunit of the mitochondrial membrane respiratory chain NADH dehydrogenase (Complex I) that is believed to belong to the minimal assembly required for catalysis. Complex I functions in the transfer of electrons from NADH to the respiratory chain. The immediate electron acceptor for the enzyme is believed to be ubiquinone. The polypeptide is NADH-ubiquinone oxidoreductase chain 2 (MT-ND2) (Varanus nebulosus (Clouded monitor)).